Here is a 162-residue protein sequence, read N- to C-terminus: UPF0114 protein PFLU_5318 (162 aa).

A run of 3 helical transmembrane segments spans residues 15–35 (LLAP…LKFF), 53–73 (LILV…LVMV), and 136–156 (LMWY…MGYL).

The protein belongs to the UPF0114 family.

Its subcellular location is the cell membrane. This Pseudomonas fluorescens (strain SBW25) protein is UPF0114 protein PFLU_5318.